A 393-amino-acid chain; its full sequence is Serine/threonine protein kinase AFUB_078980 (393 aa).

Positions 61-390 constitute a Protein kinase domain; it reads YQVLSKLGFG…APELLTDPWL (330 aa). Residues 67 to 75 and K90 each bind ATP; that span reads LGFGANSTV. The active-site Proton acceptor is the D190.

It belongs to the protein kinase superfamily. CMGC Ser/Thr protein kinase family.

It carries out the reaction L-seryl-[protein] + ATP = O-phospho-L-seryl-[protein] + ADP + H(+). It catalyses the reaction L-threonyl-[protein] + ATP = O-phospho-L-threonyl-[protein] + ADP + H(+). In terms of biological role, serine/threonine protein kinase; part of the subtelomeric hrmA-associated cluster (HAC) containing genes that alter the hyphal surface (such as reduced total chitin or increased beta-glucan exposure) and perturb inter-hyphal interactions within the developing biofilms, resulting in a loss of vertically aligned polarized growing filaments. Consequently, this hypoxia-typic morphotype (called H-MORPH) with altered biofilm architecture leads to increased hypoxia fitness, increased host inflammation, rapid disease progression, and mortality in a murine model of invasive aspergillosis. In Aspergillus fumigatus (strain CBS 144.89 / FGSC A1163 / CEA10) (Neosartorya fumigata), this protein is Serine/threonine protein kinase AFUB_078980.